The following is a 963-amino-acid chain: Protein translocase subunit SecA (963 aa).

Residues Q87, 105–109, and D524 contribute to the ATP site; that span reads GEGKT. Zn(2+)-binding residues include C946, C948, C957, and H958.

It belongs to the SecA family. Monomer and homodimer. Part of the essential Sec protein translocation apparatus which comprises SecA, SecYEG and auxiliary proteins SecDF-YajC and YidC. Zn(2+) is required as a cofactor.

The protein localises to the cell inner membrane. The protein resides in the cytoplasm. It catalyses the reaction ATP + H2O + cellular proteinSide 1 = ADP + phosphate + cellular proteinSide 2.. Functionally, part of the Sec protein translocase complex. Interacts with the SecYEG preprotein conducting channel. Has a central role in coupling the hydrolysis of ATP to the transfer of proteins into and across the cell membrane, serving both as a receptor for the preprotein-SecB complex and as an ATP-driven molecular motor driving the stepwise translocation of polypeptide chains across the membrane. The protein is Protein translocase subunit SecA of Methylobacterium radiotolerans (strain ATCC 27329 / DSM 1819 / JCM 2831 / NBRC 15690 / NCIMB 10815 / 0-1).